Reading from the N-terminus, the 217-residue chain is MOB kinase activator-like 2 (217 aa).

The segment at 15 to 38 (GKESIRGNYKPKKHPRGSSRHTMR) is disordered. Residues 23 to 38 (YKPKKHPRGSSRHTMR) show a composition bias toward basic residues. Residues Cys-89, Cys-94, His-167, and His-172 each contribute to the Zn(2+) site.

The protein belongs to the MOB1/phocein family.

This chain is MOB kinase activator-like 2 (mob2), found in Dictyostelium discoideum (Social amoeba).